Consider the following 281-residue polypeptide: ATP phosphoribosyltransferase (281 aa).

It belongs to the ATP phosphoribosyltransferase family. Long subfamily. As to quaternary structure, equilibrium between an active dimeric form, an inactive hexameric form and higher aggregates. Interconversion between the various forms is largely reversible and is influenced by the natural substrates and inhibitors of the enzyme. Mg(2+) is required as a cofactor.

The protein localises to the cytoplasm. It catalyses the reaction 1-(5-phospho-beta-D-ribosyl)-ATP + diphosphate = 5-phospho-alpha-D-ribose 1-diphosphate + ATP. The protein operates within amino-acid biosynthesis; L-histidine biosynthesis; L-histidine from 5-phospho-alpha-D-ribose 1-diphosphate: step 1/9. Feedback inhibited by histidine. Functionally, catalyzes the condensation of ATP and 5-phosphoribose 1-diphosphate to form N'-(5'-phosphoribosyl)-ATP (PR-ATP). Has a crucial role in the pathway because the rate of histidine biosynthesis seems to be controlled primarily by regulation of HisG enzymatic activity. This chain is ATP phosphoribosyltransferase, found in Mycolicibacterium gilvum (strain PYR-GCK) (Mycobacterium gilvum (strain PYR-GCK)).